The chain runs to 843 residues: Protein translocase subunit SecA 1 (843 aa).

Residues Gln91, 109 to 113, and Asp498 contribute to the ATP site; that span reads GEGKT. Positions 799–813 are enriched in basic and acidic residues; the sequence is EAKHVSAEDGKEKVK. Residues 799-826 are disordered; it reads EAKHVSAEDGKEKVKPKPIVKGDQVGRN. Residues Cys829, Cys831, Cys840, and His841 each coordinate Zn(2+).

It belongs to the SecA family. Monomer and homodimer. Part of the essential Sec protein translocation apparatus which comprises SecA, SecYEG and auxiliary proteins SecDF. Other proteins may also be involved. Zn(2+) is required as a cofactor.

It localises to the cell membrane. The protein localises to the cytoplasm. It catalyses the reaction ATP + H2O + cellular proteinSide 1 = ADP + phosphate + cellular proteinSide 2.. Part of the Sec protein translocase complex. Interacts with the SecYEG preprotein conducting channel. Has a central role in coupling the hydrolysis of ATP to the transfer of proteins into and across the cell membrane, serving as an ATP-driven molecular motor driving the stepwise translocation of polypeptide chains across the membrane. This chain is Protein translocase subunit SecA 1, found in Staphylococcus aureus (strain N315).